The chain runs to 722 residues: A-type ATP synthase subunit I (722 aa).

A compositionally biased stretch (basic and acidic residues) spans 309–321 (DYKPTGHDQHVPA). The segment at 309-352 (DYKPTGHDQHVPADDGADAATDGGTTASFDETDSPPVIQDNPGP) is disordered. A compositionally biased stretch (low complexity) spans 326–335 (DAATDGGTTA). Helical transmembrane passes span 384 to 404 (FYGF…LGFW), 419 to 439 (GVAM…GEVF), 474 to 494 (LAAS…FGFV), 505 to 525 (AALE…WLFS), 554 to 574 (LAAA…AGFL), 590 to 610 (IAAV…LVFG), 639 to 659 (FMLF…MHMG), and 662 to 682 (GILI…ALGV).

Belongs to the V-ATPase 116 kDa subunit family. In terms of assembly, has multiple subunits with at least A(3), B(3), C, D, E, F, H, I and proteolipid K(x).

Its subcellular location is the cell membrane. Functionally, component of the A-type ATP synthase that produces ATP from ADP in the presence of a proton gradient across the membrane. The protein is A-type ATP synthase subunit I of Halobacterium salinarum (strain ATCC 700922 / JCM 11081 / NRC-1) (Halobacterium halobium).